A 142-amino-acid chain; its full sequence is Large ribosomal subunit protein uL16 (142 aa).

A compositionally biased stretch (basic residues) spans Met-1 to Arg-14. The segment at Met-1 to Thr-22 is disordered.

Belongs to the universal ribosomal protein uL16 family. In terms of assembly, part of the 50S ribosomal subunit.

Its function is as follows. Binds 23S rRNA and is also seen to make contacts with the A and possibly P site tRNAs. This Synechococcus elongatus (strain ATCC 33912 / PCC 7942 / FACHB-805) (Anacystis nidulans R2) protein is Large ribosomal subunit protein uL16.